Here is a 934-residue protein sequence, read N- to C-terminus: Diacylglycerol kinase theta (934 aa).

Positions 1-50 are disordered; that stretch reads MAAAAEPGARTWPGSGSPRLGSPAGSPVLGISGRTRPGSGPERTSRAIGS. S22 and S26 each carry phosphoserine. 3 Phorbol-ester/DAG-type zinc fingers span residues 54–102, 115–162, and 177–228; these read GHSF…KTPC, AHCF…CSDC, and HHHW…APEC. One can recognise a Ras-associating domain in the interval 387–486; the sequence is TQEILKIYPG…TRFYVAETRA (100 aa). 2 consecutive short sequence motifs (LXXLL motif) follow at residues 547–551 and 566–570; these read LYMLA and LPDVL. In terms of domain architecture, DAGKc spans 576-713; it reads PDCCPLLVFV…MDRWTILLDA (138 aa). Basic residues predominate over residues 905 to 916; sequence LRKAKQKPRKAG. The interval 905-934 is disordered; that stretch reads LRKAKQKPRKAGANRDTRVDTLPAPEGNPL.

This sequence belongs to the eukaryotic diacylglycerol kinase family. As to quaternary structure, interacts with RHOA (constitutively activated, GTP-bound); the interaction inhibits DGKQ. Interacts with PRKCE. Interacts with PRKCH. Interacts with PLCB1. Interacts with NR5A1; the interaction requires both LXXLL motifs in DGKQ and is required for full phosphatidic acid-mediated activation of NR5A1. In terms of processing, phosphorylated by PRKCE and PRKCH in vitro. As to expression, widely expressed in all brain regions, including the cortex and hippocampus with a specific expression in neuronal cells (at protein level).

It localises to the cytoplasm. The protein resides in the cytosol. It is found in the cell membrane. Its subcellular location is the synapse. The protein localises to the cytoskeleton. It localises to the nucleus. The protein resides in the nucleus speckle. It is found in the nucleus matrix. The enzyme catalyses a 1,2-diacyl-sn-glycerol + ATP = a 1,2-diacyl-sn-glycero-3-phosphate + ADP + H(+). It catalyses the reaction a 1-O-alkyl-sn-glycerol + ATP = a 1-O-alkyl-sn-glycero-3-phosphate + ADP + H(+). It carries out the reaction 1-O-alkyl-2-acyl-sn-glycerol + ATP = 1-O-alkyl-2-acyl-sn-glycero-3-phosphate + ADP + H(+). The catalysed reaction is 1,2-di-(9Z-octadecenoyl)-sn-glycerol + ATP = 1,2-di-(9Z-octadecenoyl)-sn-glycero-3-phosphate + ADP + H(+). The enzyme catalyses 1-O-hexadecyl-sn-glycerol + ATP = 1-O-hexadecyl-sn-glycero-3-phosphate + ADP + H(+). It catalyses the reaction 1-O-hexadecyl-2-acetyl-sn-glycerol + ATP = 1-O-hexadecyl-2-acetyl-sn-glycero-3-phosphate + ADP + H(+). It carries out the reaction 1-octadecanoyl-2-(5Z,8Z,11Z,14Z-eicosatetraenoyl)-sn-glycerol + ATP = 1-octadecanoyl-2-(5Z,8Z,11Z,14Z-eicosatetraenoyl)-sn-glycero-3-phosphate + ADP + H(+). It participates in lipid metabolism; glycerolipid metabolism. With respect to regulation, activated by phosphatidylserine. Functionally, diacylglycerol kinase that converts diacylglycerol/DAG into phosphatidic acid/phosphatidate/PA and regulates the respective levels of these two bioactive lipids. Thereby, acts as a central switch between the signaling pathways activated by these second messengers with different cellular targets and opposite effects in numerous biological processes. Within the adrenocorticotropic hormone signaling pathway, produces phosphatidic acid which in turn activates NR5A1 and subsequent steroidogenic gene transcription. Also functions downstream of the nerve growth factor signaling pathway being specifically activated in the nucleus by the growth factor. Through its diacylglycerol activity also regulates synaptic vesicle endocytosis. The polypeptide is Diacylglycerol kinase theta (Dgkq) (Mus musculus (Mouse)).